Here is a 350-residue protein sequence, read N- to C-terminus: Protein RecA (350 aa).

67–74 (GPESSGKT) provides a ligand contact to ATP.

This sequence belongs to the RecA family.

It localises to the cytoplasm. Can catalyze the hydrolysis of ATP in the presence of single-stranded DNA, the ATP-dependent uptake of single-stranded DNA by duplex DNA, and the ATP-dependent hybridization of homologous single-stranded DNAs. It interacts with LexA causing its activation and leading to its autocatalytic cleavage. In Mycobacterium avium (strain 104), this protein is Protein RecA.